The sequence spans 373 residues: P2Y purinoceptor 1 (373 aa).

At 1-51 (MTEVLWPAAPNGTDAAFLASPGFHWGNSTATSTAAAAAPFRCALTKTGFQF) the chain is on the extracellular side. N-linked (GlcNAc...) asparagine glycosylation is found at Asn-11 and Asn-27. 2 cysteine pairs are disulfide-bonded: Cys-42-Cys-296 and Cys-124-Cys-202. Lys-46 is an ADP binding site. Residues 52-74 (YYLPAVYIVVFIIGFLGNSIAIW) form a helical membrane-spanning segment. At 75-87 (MFVFHMKPWSGIS) the chain is on the cytoplasmic side. The chain crosses the membrane as a helical span at residues 88–109 (VYMFNLALADFLYVLTLPALIF). Residues 110 to 125 (YYFNKTNWIFGDAMCK) lie on the Extracellular side of the membrane. Asn-113 carries an N-linked (GlcNAc...) asparagine glycan. A helical transmembrane segment spans residues 126–147 (LQRFIFHVNLYGSILFLTCISA). At 148 to 166 (HRYSGVVYPLKSLGRLKKK) the chain is on the cytoplasmic side. Residues 167-188 (NAVYISVLVWLIVVVAISPILF) traverse the membrane as a helical segment. The Extracellular portion of the chain corresponds to 189-214 (YSGTGIRKNKTITCYDTTSDEYLRSY). The N-linked (GlcNAc...) asparagine glycan is linked to Asn-197. 203-205 (YDT) contacts ADP. Residues 215–237 (FIYSMCTTVAMFCVPLVLILGCY) form a helical membrane-spanning segment. Topologically, residues 238 to 260 (GLIVRALIYKDLDNSPLRRKSIY) are cytoplasmic. A helical membrane pass occupies residues 261–284 (LVIIVLTVFAVSYIPFHVMKTMNL). Residues 283-287 (NLRAR), 303-306 (YATY), and Arg-310 each bind ADP. The Extracellular segment spans residues 285–303 (RARLDFQTPEMCTFNDRVY). Residues 304–325 (ATYQVTRGLASLNSCVDPILYF) form a helical membrane-spanning segment. At 326-373 (LAGDTFRRRLSRATRKASRRSEANLQSKSEDMTLNILSEFKQNGDTSL) the chain is on the cytoplasmic side.

The protein belongs to the G-protein coupled receptor 1 family.

It localises to the cell membrane. Its function is as follows. Receptor for extracellular adenine nucleotides such as ADP. In platelets, binding to ADP leads to mobilization of intracellular calcium ions via activation of phospholipase C, a change in platelet shape, and ultimately platelet aggregation. In Cavia porcellus (Guinea pig), this protein is P2Y purinoceptor 1 (P2RY1).